The primary structure comprises 483 residues: GTPase Der (483 aa).

EngA-type G domains are found at residues 3 to 167 (FTLA…GEER) and 212 to 387 (LRIA…EIWN). Residues 9–16 (GRPNVGKS), 56–60 (DTAGL), 119–122 (NKAE), 218–225 (GRPNAGKS), 265–269 (DTAGM), and 330–333 (NKWD) contribute to the GTP site. Positions 388 to 472 (RRISTGRLNR…PIRLSLRTSD (85 aa)) constitute a KH-like domain.

The protein belongs to the TRAFAC class TrmE-Era-EngA-EngB-Septin-like GTPase superfamily. EngA (Der) GTPase family. Associates with the 50S ribosomal subunit.

GTPase that plays an essential role in the late steps of ribosome biogenesis. The sequence is that of GTPase Der from Brucella abortus (strain 2308).